A 762-amino-acid polypeptide reads, in one-letter code: MGNGSVKPKHSKHPDGQSGNLSNEALRSKVAELEREVKRKDAELQEREYHLKELREQLAKQTVAIAELTEELQSKCIQLNKLQDVIHVQGGSPLQASPDKVPLDVHRKTSGLVSLHSRRGAKAGVSAEPTSRTYDLNKPPEFSFEKARVRKDSSEKKLITDALNKNQFLKRLDPQQIKDMVECMYGRNYQQGSYIVKQGEPGNHIFVLAEGRLEVFQGEKLLSSIPMWTTFGELAILYNCTRTASVKAITNVKTWALDREVFQNIMRRTAQARDEEYRNFLRSVSLLKNLPEDKLTKIIDCLEVEYYDKGDYIIREGEEGSTFFILAKGKVKVTQSTEGHDQPQLIKTLQKGEYFGEKALISDDVRSANIIAEENDVACLVIDRETFNQTVGTFDELQKYLEGYVATLNRDDEKRHAKRSMSSWKLSKALSLEMIQLKEKVARFSSTSPFQNLEIIATLGVGGFGRVELVKVKNENIAFAMKCIRKKHIVDTKQQEHVYSEKRILEELCSPFIVKLYRTFKDNKYVYMLLEACLGGELWSILRDRGSFDEPTSKFCVACVTEAFDYLHRLGIIYRDLKPENLILDADGYLKLVDFGFAKKIGSGQKTWTFCGTPEYVAPEVILNKGHDFSVDFWSLGILVYELLTGNPPFSGIDQMMTYNLILKGIEKMDFPRKITRRPEDLIRRLCRQNPTERLGNLKNGINDIKKHRWLNGFNWEGLKARSLPSPLRRELSGPIDHSYFDKYPPEKGVPPDEMSGWDKDF.

The disordered stretch occupies residues 1 to 25 (MGNGSVKPKHSKHPDGQSGNLSNEA). A lipid anchor (N-myristoyl glycine) is attached at glycine 2. Phosphoserine is present on residues serine 110 and serine 117. A disordered region spans residues 112–138 (LVSLHSRRGAKAGVSAEPTSRTYDLNK). Residues 168 to 283 (FLKRLDPQQI…DEEYRNFLRS (116 aa)) form a cGMP-binding, high affinity; cAMP-binding, moderate affinity region. 3',5'-cyclic GMP contacts are provided by residues 232–235 (GELA), 242–243 (RT), lysine 347, 356–359 (GEKA), 366–367 (RS), aspartate 412, and arginine 415. The segment at 286 to 416 (LLKNLPEDKL…TLNRDDEKRH (131 aa)) is cGMP-binding, high affinity; cAMP-binding, low affinity. Serine 431 is subject to Phosphoserine. A Protein kinase domain is found at 453 to 711 (LEIIATLGVG…INDIKKHRWL (259 aa)). ATP-binding positions include 459–467 (LGVGGFGRV) and lysine 482. The Proton acceptor role is filled by aspartate 576. Threonine 609 bears the Phosphothreonine mark. The 51-residue stretch at 712–762 (NGFNWEGLKARSLPSPLRRELSGPIDHSYFDKYPPEKGVPPDEMSGWDKDF) folds into the AGC-kinase C-terminal domain. Positions 740-762 (YFDKYPPEKGVPPDEMSGWDKDF) are disordered.

Belongs to the protein kinase superfamily. AGC Ser/Thr protein kinase family. cGMP subfamily. As to quaternary structure, interacts with GRIA1/GLUR1. Myristoylation mediates membrane localization. As to expression, highly expressed in intestinal mucosa and is 20 times less abundant in brain and kidney. Expressed in jejunum, in the apical domain of the villus epithelium.

The protein resides in the apical cell membrane. It localises to the cell membrane. It carries out the reaction L-seryl-[protein] + ATP = O-phospho-L-seryl-[protein] + ADP + H(+). The enzyme catalyses L-threonyl-[protein] + ATP = O-phospho-L-threonyl-[protein] + ADP + H(+). With respect to regulation, binding of cGMP results in enzyme activation. In terms of biological role, crucial regulator of intestinal secretion and bone growth. Phosphorylates and activates CFTR on the plasma membrane. Plays a key role in intestinal secretion by regulating cGMP-dependent translocation of CFTR in jejunum. Acts downstream of NMDAR to activate the plasma membrane accumulation of GRIA1/GLUR1 in synapse and increase synaptic plasticity. Phosphorylates GRIA1/GLUR1 at Ser-863. Acts as regulator of gene expression and activator of the extracellular signal-regulated kinases MAPK3/ERK1 and MAPK1/ERK2 in mechanically stimulated osteoblasts. Under fluid shear stress, mediates ERK activation and subsequent induction of FOS, FOSL1/FRA1, FOSL2/FRA2 and FOSB that play a key role in the osteoblast anabolic response to mechanical stimulation. The protein is cGMP-dependent protein kinase 2 (Prkg2) of Rattus norvegicus (Rat).